The chain runs to 306 residues: Protein SULFUR DEFICIENCY-INDUCED 1 (306 aa).

TPR repeat units follow at residues 1 to 22 (MERS…NLMK), 71 to 104 (DSAL…CSKN), 107 to 140 (DSLD…IYQG), 167 to 200 (SRLL…EPDA), and 202 to 233 (KSCN…RVLG). The stretch at 72 to 139 (SALKDMAVVM…LKRKLRQIYQ (68 aa)) forms a coiled coil. The stretch at 238–260 (RTRQRAEELLSELESSLPRMRDA) forms a coiled coil. The stretch at 270-304 (LDDDFVLGLEEMTSTSFKSKRLPIFEQISSFRNTL) is one TPR 6 repeat.

Belongs to the MS5 protein family.

It is found in the nucleus. In terms of biological role, involved in the utilization of stored sulfate under sulfur-deficient conditions. In Arabidopsis thaliana (Mouse-ear cress), this protein is Protein SULFUR DEFICIENCY-INDUCED 1.